The sequence spans 506 residues: Probable alpha-L-arabinofuranosidase B (506 aa).

The N-terminal stretch at 1–26 (MSSGLSLERACAVALGIVASASLVAA) is a signal peptide. Residues 27-343 (GPCDIYSSGG…ADIVAAKYAI (317 aa)) are catalytic. 3 disulfides stabilise this stretch: Cys29–Cys39, Cys89–Cys94, and Cys184–Cys185. A glycan (N-linked (GlcNAc...) asparagine) is linked at Asn91. Asp227 provides a ligand contact to substrate. The active-site Nucleophile is the Glu229. Positions 230 and 304 each coordinate substrate. The active-site Proton donor is the Asp305. Residues 344-506 (ASLTSGPALT…VSWVVSTGFA (163 aa)) form an ABD region. Cysteines 409 and 447 form a disulfide. Substrate contacts are provided by His424, Asn426, Phe427, Asp443, His471, Glu473, Leu476, and Asp496.

The protein belongs to the glycosyl hydrolase 54 family.

It is found in the secreted. It carries out the reaction Hydrolysis of terminal non-reducing alpha-L-arabinofuranoside residues in alpha-L-arabinosides.. The protein operates within glycan metabolism; L-arabinan degradation. Alpha-L-arabinofuranosidase involved in the degradation of arabinoxylan, a major component of plant hemicellulose. Able to hydrolyze 1,5-, 1,3- and 1,2-alpha-linkages not only in L-arabinofuranosyl oligosaccharides, but also in polysaccharides containing terminal non-reducing L-arabinofuranoses in side chains, like L-arabinan, arabinogalactan and arabinoxylan. This is Probable alpha-L-arabinofuranosidase B (abfB) from Aspergillus flavus (strain ATCC 200026 / FGSC A1120 / IAM 13836 / NRRL 3357 / JCM 12722 / SRRC 167).